The primary structure comprises 635 residues: Threonine--tRNA ligase (635 aa).

The TGS domain maps to 1 to 61; the sequence is MINIKFPDGS…NHDCELRLIT (61 aa). Positions 242 to 533 are catalytic; that stretch reads DHRKIGKALD…LIEHYAGNMP (292 aa). Zn(2+) is bound by residues cysteine 333, histidine 384, and histidine 510.

Belongs to the class-II aminoacyl-tRNA synthetase family. As to quaternary structure, homodimer. Zn(2+) is required as a cofactor.

It is found in the cytoplasm. It carries out the reaction tRNA(Thr) + L-threonine + ATP = L-threonyl-tRNA(Thr) + AMP + diphosphate + H(+). Functionally, catalyzes the attachment of threonine to tRNA(Thr) in a two-step reaction: L-threonine is first activated by ATP to form Thr-AMP and then transferred to the acceptor end of tRNA(Thr). Also edits incorrectly charged L-seryl-tRNA(Thr). The polypeptide is Threonine--tRNA ligase (Francisella philomiragia subsp. philomiragia (strain ATCC 25017 / CCUG 19701 / FSC 153 / O#319-036)).